An 834-amino-acid chain; its full sequence is Translation initiation factor IF-2 (834 aa).

A disordered region spans residues 1–247 (MTEEKKFSGS…STPATVRKEQ (247 aa)). Over residues 45–101 (GGSRPSRPARPNNNNQNRPNNGGQSQNRNNQNRSNTSTGGQNRSNNGGNRNNRPGSR) the composition is skewed to low complexity. A compositionally biased stretch (basic and acidic residues) spans 109–125 (PMIREKKNWSTKPREGQ). Composition is skewed to low complexity over residues 149–165 (ASAAAKHPKKPAAATKP) and 173–201 (ATKPATASTTTGAGKFGGALASGNNSARN). Basic residues predominate over residues 224 to 233 (GSKKSRRIAA). Positions 335–504 (SRPPVVTIMG…LLQAEVLELK (170 aa)) constitute a tr-type G domain. The tract at residues 344 to 351 (GHVDHGKT) is G1. Residue 344–351 (GHVDHGKT) coordinates GTP. The tract at residues 369 to 373 (GITQH) is G2. A G3 region spans residues 390–393 (DTPG). GTP is bound by residues 390-394 (DTPGH) and 444-447 (NKID). The segment at 444-447 (NKID) is G4. The G5 stretch occupies residues 480 to 482 (SAK).

The protein belongs to the TRAFAC class translation factor GTPase superfamily. Classic translation factor GTPase family. IF-2 subfamily.

The protein localises to the cytoplasm. Functionally, one of the essential components for the initiation of protein synthesis. Protects formylmethionyl-tRNA from spontaneous hydrolysis and promotes its binding to the 30S ribosomal subunits. Also involved in the hydrolysis of GTP during the formation of the 70S ribosomal complex. In Leuconostoc mesenteroides subsp. mesenteroides (strain ATCC 8293 / DSM 20343 / BCRC 11652 / CCM 1803 / JCM 6124 / NCDO 523 / NBRC 100496 / NCIMB 8023 / NCTC 12954 / NRRL B-1118 / 37Y), this protein is Translation initiation factor IF-2.